The primary structure comprises 107 residues: Phosphoribosyl-ATP pyrophosphatase (107 aa).

The protein belongs to the PRA-PH family.

It is found in the cytoplasm. The catalysed reaction is 1-(5-phospho-beta-D-ribosyl)-ATP + H2O = 1-(5-phospho-beta-D-ribosyl)-5'-AMP + diphosphate + H(+). Its pathway is amino-acid biosynthesis; L-histidine biosynthesis; L-histidine from 5-phospho-alpha-D-ribose 1-diphosphate: step 2/9. This chain is Phosphoribosyl-ATP pyrophosphatase, found in Nitrobacter hamburgensis (strain DSM 10229 / NCIMB 13809 / X14).